The chain runs to 196 residues: Small ribosomal subunit protein uS4c (196 aa).

The disordered stretch occupies residues Gly-16 to Leu-36. The region spanning Met-89 to Asn-150 is the S4 RNA-binding domain.

It belongs to the universal ribosomal protein uS4 family. As to quaternary structure, part of the 30S ribosomal subunit. Contacts protein S5. The interaction surface between S4 and S5 is involved in control of translational fidelity.

The protein localises to the plastid. It localises to the chloroplast. Its function is as follows. One of the primary rRNA binding proteins, it binds directly to 16S rRNA where it nucleates assembly of the body of the 30S subunit. With S5 and S12 plays an important role in translational accuracy. This is Small ribosomal subunit protein uS4c (rps4) from Rhapis humilis (Slender lady palm).